A 360-amino-acid chain; its full sequence is Phosphoserine aminotransferase (360 aa).

Residue Arg-42 participates in L-glutamate binding. Pyridoxal 5'-phosphate contacts are provided by Trp-102, Thr-152, Asp-171, and Gln-194. Lys-195 carries the N6-(pyridoxal phosphate)lysine modification. 237 to 238 (NT) contributes to the pyridoxal 5'-phosphate binding site.

Belongs to the class-V pyridoxal-phosphate-dependent aminotransferase family. SerC subfamily. As to quaternary structure, homodimer. Pyridoxal 5'-phosphate serves as cofactor.

The protein localises to the cytoplasm. It catalyses the reaction O-phospho-L-serine + 2-oxoglutarate = 3-phosphooxypyruvate + L-glutamate. The catalysed reaction is 4-(phosphooxy)-L-threonine + 2-oxoglutarate = (R)-3-hydroxy-2-oxo-4-phosphooxybutanoate + L-glutamate. Its pathway is amino-acid biosynthesis; L-serine biosynthesis; L-serine from 3-phospho-D-glycerate: step 2/3. It functions in the pathway cofactor biosynthesis; pyridoxine 5'-phosphate biosynthesis; pyridoxine 5'-phosphate from D-erythrose 4-phosphate: step 3/5. Functionally, catalyzes the reversible conversion of 3-phosphohydroxypyruvate to phosphoserine and of 3-hydroxy-2-oxo-4-phosphonooxybutanoate to phosphohydroxythreonine. In Coxiella burnetii (strain RSA 331 / Henzerling II), this protein is Phosphoserine aminotransferase.